Reading from the N-terminus, the 475-residue chain is Ribulose bisphosphate carboxylase large chain (475 aa).

Substrate contacts are provided by Asn-123 and Thr-173. Lys-175 serves as the catalytic Proton acceptor. Lys-177 is a binding site for substrate. Mg(2+)-binding residues include Lys-201, Asp-203, and Glu-204. N6-carboxylysine is present on Lys-201. The Proton acceptor role is filled by His-294. Positions 295, 327, and 379 each coordinate substrate.

It belongs to the RuBisCO large chain family. Type I subfamily. Heterohexadecamer of 8 large chains and 8 small chains; disulfide-linked. The disulfide link is formed within the large subunit homodimers. Mg(2+) serves as cofactor. In terms of processing, the disulfide bond which can form in the large chain dimeric partners within the hexadecamer appears to be associated with oxidative stress and protein turnover.

The protein resides in the plastid. The protein localises to the chloroplast. It catalyses the reaction 2 (2R)-3-phosphoglycerate + 2 H(+) = D-ribulose 1,5-bisphosphate + CO2 + H2O. It carries out the reaction D-ribulose 1,5-bisphosphate + O2 = 2-phosphoglycolate + (2R)-3-phosphoglycerate + 2 H(+). In terms of biological role, ruBisCO catalyzes two reactions: the carboxylation of D-ribulose 1,5-bisphosphate, the primary event in carbon dioxide fixation, as well as the oxidative fragmentation of the pentose substrate in the photorespiration process. Both reactions occur simultaneously and in competition at the same active site. The chain is Ribulose bisphosphate carboxylase large chain from Euglena gracilis.